We begin with the raw amino-acid sequence, 479 residues long: Anaerobic nitric oxide reductase flavorubredoxin (479 aa).

Residues 30 to 210 are zinc metallo-hydrolase; sequence LRGSSYNSYL…PFSRLVTPKI (181 aa). Histidine 79, glutamate 81, aspartate 83, histidine 147, aspartate 166, and histidine 227 together coordinate Fe cation. Residues 254–393 form the Flavodoxin-like domain; that stretch reads ITIFYDTMSN…LCRQHGRDIA (140 aa). FMN contacts are provided by residues 260 to 264 and 342 to 369; these read TMSNN and AFGS…EMSL. Residues 423–474 enclose the Rubredoxin-like domain; sequence GPKMQCSVCQWIYDPALGEPLQDVAPGTPWSDVPDNFLCPECSLGKDVFDVL. Cysteine 428, cysteine 431, cysteine 461, and cysteine 464 together coordinate Fe cation.

In the N-terminal section; belongs to the zinc metallo-hydrolase group 3 family. In terms of assembly, homotetramer. Requires Fe cation as cofactor. FMN is required as a cofactor.

The protein localises to the cytoplasm. The protein operates within nitrogen metabolism; nitric oxide reduction. In terms of biological role, anaerobic nitric oxide reductase; uses NADH to detoxify nitric oxide (NO), protecting several 4Fe-4S NO-sensitive enzymes. Has at least 2 reductase partners, only one of which (NorW, flavorubredoxin reductase) has been identified. NO probably binds to the di-iron center; electrons enter from the NorW at rubredoxin and are transferred sequentially to the FMN center and the di-iron center. Also able to function as an aerobic oxygen reductase. The protein is Anaerobic nitric oxide reductase flavorubredoxin of Salmonella paratyphi B (strain ATCC BAA-1250 / SPB7).